Here is a 208-residue protein sequence, read N- to C-terminus: Large ribosomal subunit protein uL3 (208 aa).

Positions 116–148 (GFQGVIKRHGQSRGPMAHGSRYHRRPGSMGPVA) are disordered.

This sequence belongs to the universal ribosomal protein uL3 family. As to quaternary structure, part of the 50S ribosomal subunit. Forms a cluster with proteins L14 and L19.

Functionally, one of the primary rRNA binding proteins, it binds directly near the 3'-end of the 23S rRNA, where it nucleates assembly of the 50S subunit. This Streptococcus pneumoniae (strain Hungary19A-6) protein is Large ribosomal subunit protein uL3.